The primary structure comprises 317 residues: Methionyl-tRNA formyltransferase (317 aa).

Residue 110–113 participates in (6S)-5,6,7,8-tetrahydrofolate binding; it reads SLLP.

It belongs to the Fmt family.

It carries out the reaction L-methionyl-tRNA(fMet) + (6R)-10-formyltetrahydrofolate = N-formyl-L-methionyl-tRNA(fMet) + (6S)-5,6,7,8-tetrahydrofolate + H(+). In terms of biological role, attaches a formyl group to the free amino group of methionyl-tRNA(fMet). The formyl group appears to play a dual role in the initiator identity of N-formylmethionyl-tRNA by promoting its recognition by IF2 and preventing the misappropriation of this tRNA by the elongation apparatus. The chain is Methionyl-tRNA formyltransferase from Bacillus pumilus (strain SAFR-032).